The following is a 1093-amino-acid chain: Leucine-rich repeats and immunoglobulin-like domains protein 1 (1093 aa).

Positions 1 to 34 (MARPVRGGLGAPRRSPCLLLLWLLLLRLEPVTAA) are cleaved as a signal peptide. The LRRNT domain maps to 35–68 (AGPRAPCAAACTCAGDSLDCGGRGLAALPGDLPS). Topologically, residues 35-794 (AGPRAPCAAA…GCRKDGTTVG (760 aa)) are extracellular. A disulfide bond links Cys-45 and Cys-54. 15 LRR repeats span residues 69–90 (WTRS…GFED), 93–114 (NLQE…GAAS), 116–137 (HVVS…QLKA), 140–161 (SLEV…CFPH), 164–185 (PIKE…AFDG), 189–210 (SLLT…AFKL), 212–233 (RLTQ…TFQG), 236–257 (SLEV…AFWG), 260–281 (KMHV…SLYG), 284–305 (ALHQ…GWSF), 308–329 (KLHE…SLAE), 332–353 (SLSV…AFKG), 356–378 (SLRV…SGAF), 383–404 (SLSK…AFSG), and 407–428 (GLEH…AFVK). N-linked (GlcNAc...) asparagine glycosylation is present at Asn-74. A glycan (N-linked (GlcNAc...) asparagine) is linked at Asn-150. An N-linked (GlcNAc...) asparagine glycan is attached at Asn-246. Residues Asn-292 and Asn-318 are each glycosylated (N-linked (GlcNAc...) asparagine). One can recognise an LRRCT domain in the interval 440–491 (DSFLCDCQLKWLPPWLIGRMLQAFVTATCAHPESLKGQSIFSVPPESFVCDD). 4 disulfides stabilise this stretch: Cys-444–Cys-468, Cys-446–Cys-489, Cys-516–Cys-577, and Cys-620–Cys-672. Ig-like C2-type domains lie at 495–594 (PQII…ARLT), 599–688 (PSFT…ATLT), and 693–779 (PSLV…SQLS). N-linked (GlcNAc...) asparagine glycosylation is present at Asn-684. The cysteines at positions 714 and 763 are disulfide-linked. A helical transmembrane segment spans residues 795–815 (IFTIAVVSSIVLTSLVWVCII). The Cytoplasmic segment spans residues 816–1093 (YQTRKKSEEY…RVPLLLAPKS (278 aa)). Disordered stretches follow at residues 946–983 (AFHP…CSRT) and 1063–1093 (PKAC…APKS).

As to quaternary structure, interacts (via extracellular LRR and Ig-like domains) with EGFR/ERBB1, ERBB2, ERBB3 and ERBB4 (via extracellular domain). The physiological relevance of the interaction is controversial; LRIG1 may have low affinity for EGFR, and interaction may occur only when high levels of both proteins are present. In terms of tissue distribution, widely expressed.

The protein localises to the cell membrane. Its function is as follows. Acts as a feedback negative regulator of signaling by receptor tyrosine kinases, through a mechanism that involves enhancement of receptor ubiquitination and accelerated intracellular degradation. This is Leucine-rich repeats and immunoglobulin-like domains protein 1 from Homo sapiens (Human).